The following is a 283-amino-acid chain: Probable protein phosphatase 2C 58 (283 aa).

In terms of domain architecture, PPM-type phosphatase spans 35 to 282; that stretch reads THGFHCVKGK…DDISCIVVKF (248 aa). Mn(2+) is bound by residues D72, G73, D234, and D273.

This sequence belongs to the PP2C family. Mg(2+) is required as a cofactor. Mn(2+) serves as cofactor.

It carries out the reaction O-phospho-L-seryl-[protein] + H2O = L-seryl-[protein] + phosphate. The catalysed reaction is O-phospho-L-threonyl-[protein] + H2O = L-threonyl-[protein] + phosphate. The protein is Probable protein phosphatase 2C 58 of Arabidopsis thaliana (Mouse-ear cress).